A 66-amino-acid polypeptide reads, in one-letter code: Cold shock-like protein CspLB (66 aa).

The CSD domain maps to 4–63 (GTVKWFNSEKGFGFIEVEGGDDVFVHFSAIEGEGFKTLDEGQSVEFEIVEGQRGPQAEKV).

In terms of assembly, homodimer.

Its subcellular location is the cytoplasm. The polypeptide is Cold shock-like protein CspLB (cspLB) (Listeria monocytogenes serovar 1/2a (strain ATCC BAA-679 / EGD-e)).